We begin with the raw amino-acid sequence, 263 residues long: Malonyl-[acyl-carrier protein] O-methyltransferase (263 aa).

Belongs to the methyltransferase superfamily.

It carries out the reaction malonyl-[ACP] + S-adenosyl-L-methionine = malonyl-[ACP] methyl ester + S-adenosyl-L-homocysteine. It functions in the pathway cofactor biosynthesis; biotin biosynthesis. In terms of biological role, converts the free carboxyl group of a malonyl-thioester to its methyl ester by transfer of a methyl group from S-adenosyl-L-methionine (SAM). It allows to synthesize pimeloyl-ACP via the fatty acid synthetic pathway. The polypeptide is Malonyl-[acyl-carrier protein] O-methyltransferase (Chlorobium luteolum (strain DSM 273 / BCRC 81028 / 2530) (Pelodictyon luteolum)).